Here is a 257-residue protein sequence, read N- to C-terminus: Phosphonates import ATP-binding protein PhnC 1 (257 aa).

In terms of domain architecture, ABC transporter spans 2-246; sequence LKITNLTKRY…EMDTIYAGVP (245 aa). Residue 35–42 coordinates ATP; sequence GSSGAGKS.

This sequence belongs to the ABC transporter superfamily. Phosphonates importer (TC 3.A.1.9.1) family. As to quaternary structure, the complex is composed of two ATP-binding proteins (PhnC), two transmembrane proteins (PhnE) and a solute-binding protein (PhnD).

Its subcellular location is the cell inner membrane. It catalyses the reaction phosphonate(out) + ATP + H2O = phosphonate(in) + ADP + phosphate + H(+). Functionally, part of the ABC transporter complex PhnCDE involved in phosphonates import. Responsible for energy coupling to the transport system. This chain is Phosphonates import ATP-binding protein PhnC 1, found in Ruegeria sp. (strain TM1040) (Silicibacter sp.).